The following is a 227-amino-acid chain: Arginine ABC transporter permease protein ArtM (227 aa).

An ABC transmembrane type-1 domain is found at I13 to L209. 5 helical membrane-spanning segments follow: residues L17 to L37, L51 to G71, I78 to L98, I155 to G175, and L188 to L208.

This sequence belongs to the binding-protein-dependent transport system permease family. HisMQ subfamily. The complex is composed of two ATP-binding proteins (ArtP), two transmembrane proteins (ArtM and ArtQ) and a solute-binding protein (ArtI).

It localises to the cell inner membrane. Functionally, part of the ABC transporter complex ArtPIQM involved in arginine transport. Probably responsible for the translocation of the substrate across the membrane. This chain is Arginine ABC transporter permease protein ArtM (artM), found in Haemophilus influenzae (strain ATCC 51907 / DSM 11121 / KW20 / Rd).